The chain runs to 378 residues: Queuine tRNA-ribosyltransferase (378 aa).

Catalysis depends on D89, which acts as the Proton acceptor. Residues 89–93 (DSGGF), D143, Q187, and G214 each bind substrate. The RNA binding stretch occupies residues 245–251 (GVGKPED). D264 serves as the catalytic Nucleophile. Positions 269 to 273 (TRNAR) are RNA binding; important for wobble base 34 recognition. 4 residues coordinate Zn(2+): C302, C304, C307, and H333.

It belongs to the queuine tRNA-ribosyltransferase family. As to quaternary structure, homodimer. Within each dimer, one monomer is responsible for RNA recognition and catalysis, while the other monomer binds to the replacement base PreQ1. The cofactor is Zn(2+).

It carries out the reaction 7-aminomethyl-7-carbaguanine + guanosine(34) in tRNA = 7-aminomethyl-7-carbaguanosine(34) in tRNA + guanine. It functions in the pathway tRNA modification; tRNA-queuosine biosynthesis. Its function is as follows. Catalyzes the base-exchange of a guanine (G) residue with the queuine precursor 7-aminomethyl-7-deazaguanine (PreQ1) at position 34 (anticodon wobble position) in tRNAs with GU(N) anticodons (tRNA-Asp, -Asn, -His and -Tyr). Catalysis occurs through a double-displacement mechanism. The nucleophile active site attacks the C1' of nucleotide 34 to detach the guanine base from the RNA, forming a covalent enzyme-RNA intermediate. The proton acceptor active site deprotonates the incoming PreQ1, allowing a nucleophilic attack on the C1' of the ribose to form the product. After dissociation, two additional enzymatic reactions on the tRNA convert PreQ1 to queuine (Q), resulting in the hypermodified nucleoside queuosine (7-(((4,5-cis-dihydroxy-2-cyclopenten-1-yl)amino)methyl)-7-deazaguanosine). The protein is Queuine tRNA-ribosyltransferase of Aeromonas hydrophila subsp. hydrophila (strain ATCC 7966 / DSM 30187 / BCRC 13018 / CCUG 14551 / JCM 1027 / KCTC 2358 / NCIMB 9240 / NCTC 8049).